The following is a 283-amino-acid chain: 4-diphosphocytidyl-2-C-methyl-D-erythritol kinase (283 aa).

Lys10 is a catalytic residue. 99 to 109 (PMGGGLGGGSS) contacts ATP. Asp141 is an active-site residue.

It belongs to the GHMP kinase family. IspE subfamily. In terms of assembly, homodimer.

The catalysed reaction is 4-CDP-2-C-methyl-D-erythritol + ATP = 4-CDP-2-C-methyl-D-erythritol 2-phosphate + ADP + H(+). Its pathway is isoprenoid biosynthesis; isopentenyl diphosphate biosynthesis via DXP pathway; isopentenyl diphosphate from 1-deoxy-D-xylulose 5-phosphate: step 3/6. In terms of biological role, catalyzes the phosphorylation of the position 2 hydroxy group of 4-diphosphocytidyl-2C-methyl-D-erythritol. This is 4-diphosphocytidyl-2-C-methyl-D-erythritol kinase from Escherichia coli O157:H7 (strain EC4115 / EHEC).